The chain runs to 712 residues: Probable serine/threonine-protein kinase fhkE (712 aa).

The region spanning 46-100 is the FHA domain; that stretch reads ITFGRLKDSTVHYNDKSISGSHCKITRESNDDDGVVIAFIYDNSTNGTFIDNIKV. The Protein kinase domain maps to 145 to 411; it reads YFIGEMLGQG…CNNIIQHPWF (267 aa). ATP contacts are provided by residues 151-159 and Lys174; that span reads LGQGNFATV. Asp270 functions as the Proton acceptor in the catalytic mechanism. A coiled-coil region spans residues 414-442; sequence NVKLSTLLEEDERLRKKAEAEVEANNNNT. The tract at residues 431–695 is disordered; that stretch reads AEAEVEANNN…KCQYDPNCYR (265 aa). Composition is skewed to low complexity over residues 436 to 446, 459 to 481, 514 to 571, 595 to 605, and 616 to 639; these read EANNNNTNKSN, GNCS…IKSN, NNDN…SNDT, NLQNHLNNNKI, and NNNN…NNNN. Residues 669–678 show a composition bias toward polar residues; it reads PQNSSNNNSG.

The protein belongs to the protein kinase superfamily. CAMK Ser/Thr protein kinase family. CHK2 subfamily.

It carries out the reaction L-seryl-[protein] + ATP = O-phospho-L-seryl-[protein] + ADP + H(+). The enzyme catalyses L-threonyl-[protein] + ATP = O-phospho-L-threonyl-[protein] + ADP + H(+). The polypeptide is Probable serine/threonine-protein kinase fhkE (fhkE) (Dictyostelium discoideum (Social amoeba)).